The following is a 422-amino-acid chain: CinA-like protein (422 aa).

It belongs to the CinA family.

This chain is CinA-like protein, found in Mycolicibacterium vanbaalenii (strain DSM 7251 / JCM 13017 / BCRC 16820 / KCTC 9966 / NRRL B-24157 / PYR-1) (Mycobacterium vanbaalenii).